A 639-amino-acid chain; its full sequence is 3D-(3,5/4)-trihydroxycyclohexane-1,2-dione hydrolase (639 aa).

E62 is a binding site for thiamine diphosphate. The interval 438-518 is thiamine pyrophosphate binding; that stretch reads SLPGDLQRMW…INILLFDNCG (81 aa). Residues D489 and N516 each coordinate Mg(2+).

This sequence belongs to the TPP enzyme family. Mg(2+) is required as a cofactor. Thiamine diphosphate serves as cofactor.

The catalysed reaction is 3D-3,5/4-trihydroxycyclohexane-1,2-dione + H2O = 5-deoxy-D-glucuronate + H(+). Its pathway is polyol metabolism; myo-inositol degradation into acetyl-CoA; acetyl-CoA from myo-inositol: step 3/7. Involved in the cleavage of the C1-C2 bond of 3D-(3,5/4)-trihydroxycyclohexane-1,2-dione (THcHDO) to yield 5-deoxy-glucuronate (5DG). This Clostridium perfringens (strain ATCC 13124 / DSM 756 / JCM 1290 / NCIMB 6125 / NCTC 8237 / Type A) protein is 3D-(3,5/4)-trihydroxycyclohexane-1,2-dione hydrolase.